A 624-amino-acid polypeptide reads, in one-letter code: Laccase-1 (624 aa).

A signal peptide spans Met1–Ser20. 2 Plastocyanin-like domains span residues Thr69 to Asn183 and Asp195 to Tyr355. 4 residues coordinate Cu cation: His117, His119, His162, and His164. Cys138 and Cys578 are disulfide-bonded. Residues Asn242, Asn320, and Asn430 are each glycosylated (N-linked (GlcNAc...) asparagine). Positions Ile469 to Pro562 constitute a Plastocyanin-like 3 domain. Residues His480, His483, and His485 each coordinate Cu cation. An N-linked (GlcNAc...) asparagine glycan is attached at Asn503. Cu cation contacts are provided by His543, Cys544, His545, and His549. A disordered region spans residues Asp582 to Ser603. Positions Ser592–Ser603 are enriched in low complexity.

This sequence belongs to the multicopper oxidase family. The cofactor is Cu cation.

It is found in the secreted. Its subcellular location is the cell wall. It catalyses the reaction 4 hydroquinone + O2 = 4 benzosemiquinone + 2 H2O. Functionally, laccase that catalyzes the oxidation of certain aromatic compounds, including L-dopa, to quinones, which then polymerize to melanin. Able to oxidize a wide variety of aromatic diphenol and diamino groups in the ortho, meta, and para positions but not monophenolic groups such as in phenol, tyramine, or tyrosine. Plays an important role in virulence. Plays a role in dissemination to extrapulmonary sites but is not involved in pulmonary growth or in elicitation of cellular immune responses in the lung. The polypeptide is Laccase-1 (LAC1) (Cryptococcus neoformans var. grubii serotype A (strain H99 / ATCC 208821 / CBS 10515 / FGSC 9487) (Filobasidiella neoformans var. grubii)).